The following is a 56-amino-acid chain: UPF0339 protein NMA1193/NMA1859 (56 aa).

This sequence belongs to the UPF0339 family.

The sequence is that of UPF0339 protein NMA1193/NMA1859 from Neisseria meningitidis serogroup A / serotype 4A (strain DSM 15465 / Z2491).